The sequence spans 342 residues: Glucan endo-1,3-beta-glucosidase (342 aa).

The signal sequence occupies residues 1 to 26 (MLASSPMLLFLLSLLMAYNFDTTAGQ). Residue Glu-119 is the Proton donor of the active site. Glu-261 functions as the Nucleophile in the catalytic mechanism.

This sequence belongs to the glycosyl hydrolase 17 family. Post-translationally, the N-terminus is blocked.

The protein resides in the vacuole. The catalysed reaction is Hydrolysis of (1-&gt;3)-beta-D-glucosidic linkages in (1-&gt;3)-beta-D-glucans.. Is thought to be an important plant defense-related product against fungal pathogens. Accumulation of the glucanase can be detected as early as 4 hours after inoculation. This is Glucan endo-1,3-beta-glucosidase (BGL) from Brassica campestris (Field mustard).